The sequence spans 330 residues: Glycerol-3-phosphate dehydrogenase [NAD(P)+] (330 aa).

NADPH contacts are provided by Ser-10, Trp-11, Arg-31, and Lys-105. Residues Lys-105, Gly-135, and Ser-137 each contribute to the sn-glycerol 3-phosphate site. Ala-139 contacts NADPH. The sn-glycerol 3-phosphate site is built by Lys-190, Asp-243, Ser-253, Arg-254, and Asn-255. Lys-190 functions as the Proton acceptor in the catalytic mechanism. Arg-254 serves as a coordination point for NADPH. 2 residues coordinate NADPH: Val-278 and Glu-280.

This sequence belongs to the NAD-dependent glycerol-3-phosphate dehydrogenase family.

The protein resides in the cytoplasm. The catalysed reaction is sn-glycerol 3-phosphate + NAD(+) = dihydroxyacetone phosphate + NADH + H(+). The enzyme catalyses sn-glycerol 3-phosphate + NADP(+) = dihydroxyacetone phosphate + NADPH + H(+). Its pathway is membrane lipid metabolism; glycerophospholipid metabolism. Catalyzes the reduction of the glycolytic intermediate dihydroxyacetone phosphate (DHAP) to sn-glycerol 3-phosphate (G3P), the key precursor for phospholipid synthesis. The protein is Glycerol-3-phosphate dehydrogenase [NAD(P)+] of Solidesulfovibrio magneticus (strain ATCC 700980 / DSM 13731 / RS-1) (Desulfovibrio magneticus).